A 673-amino-acid polypeptide reads, in one-letter code: Methionine--tRNA ligase (673 aa).

A 'HIGH' region motif is present at residues 13 to 23; that stretch reads PYANGSIHLGH. 4 residues coordinate Zn(2+): Cys144, Cys147, Cys157, and Cys160. Positions 330–334 match the 'KMSKS' region motif; it reads KMSKS. Lys333 provides a ligand contact to ATP. The region spanning 572-673 is the tRNA-binding domain; it reads DFAQLDLRIA…GRARAGMTIS (102 aa).

It belongs to the class-I aminoacyl-tRNA synthetase family. MetG type 1 subfamily. As to quaternary structure, homodimer. Zn(2+) is required as a cofactor.

It localises to the cytoplasm. The enzyme catalyses tRNA(Met) + L-methionine + ATP = L-methionyl-tRNA(Met) + AMP + diphosphate. Is required not only for elongation of protein synthesis but also for the initiation of all mRNA translation through initiator tRNA(fMet) aminoacylation. In Dichelobacter nodosus (strain VCS1703A), this protein is Methionine--tRNA ligase.